A 347-amino-acid polypeptide reads, in one-letter code: D-alanine--D-alanine ligase (347 aa).

Positions 134 to 332 (KLYAKDLGVK…LAQSLPKTPK (199 aa)) constitute an ATP-grasp domain. 161-216 (LIKFNFPFIVKPSNAGSSLGVNVVKEEKELVYALDSAFEYSKEVLIEPFIQGVKEY) is a binding site for ATP. The Mg(2+) site is built by Asp288, Glu300, and Asn302.

This sequence belongs to the D-alanine--D-alanine ligase family. The cofactor is Mg(2+). It depends on Mn(2+) as a cofactor.

The protein localises to the cytoplasm. The enzyme catalyses 2 D-alanine + ATP = D-alanyl-D-alanine + ADP + phosphate + H(+). It functions in the pathway cell wall biogenesis; peptidoglycan biosynthesis. Its function is as follows. Cell wall formation. The chain is D-alanine--D-alanine ligase from Helicobacter pylori (strain P12).